The following is a 105-amino-acid chain: uncharacterized protein (105 aa).

Positions 14–104 (HYITACLKII…VEWLMKSNVN (91 aa)) constitute an ABM domain.

This is an uncharacterized protein from Bacillus subtilis (strain 168).